Consider the following 654-residue polypeptide: U-box domain-containing protein 12 (654 aa).

Residues isoleucine 255–glutamate 329 form the U-box domain. The interval glutamate 329–aspartate 352 is disordered. Residues serine 337–alanine 349 show a composition bias toward low complexity. ARM repeat units lie at residues asparagine 387–isoleucine 427, glutamate 430–valine 469, aspartate 471–isoleucine 510, glutamine 512–serine 551, and proline 553–serine 592.

It catalyses the reaction S-ubiquitinyl-[E2 ubiquitin-conjugating enzyme]-L-cysteine + [acceptor protein]-L-lysine = [E2 ubiquitin-conjugating enzyme]-L-cysteine + N(6)-ubiquitinyl-[acceptor protein]-L-lysine.. Its pathway is protein modification; protein ubiquitination. Its function is as follows. Functions as an E3 ubiquitin ligase. This Arabidopsis thaliana (Mouse-ear cress) protein is U-box domain-containing protein 12 (PUB12).